We begin with the raw amino-acid sequence, 497 residues long: Ectonucleoside triphosphate diphosphohydrolase 8 (497 aa).

Residues 1–8 (MGLSWKER) are Cytoplasmic-facing. The helical transmembrane segment at 9–29 (VFMALLGVAAASGLTMLVLIL) threads the bilayer. The Extracellular portion of the chain corresponds to 30 to 473 (VKAINVLLPA…AQSYSIWTAG (444 aa)). The cysteines at positions 78 and 102 are disulfide-linked. The active-site Proton acceptor is Glu168. Residues Cys245 and Cys294 are joined by a disulfide bond. A glycan (N-linked (GlcNAc...) asparagine) is linked at Asn306. A disulfide bond links Cys331 and Cys337. Residue Asn365 is glycosylated (N-linked (GlcNAc...) asparagine). Residues Cys383 and Cys405 are joined by a disulfide bond. The chain crosses the membrane as a helical span at residues 474–494 (VVFAVLTLVAILGAAAIQIFW). Topologically, residues 495-497 (TQD) are cytoplasmic.

Belongs to the GDA1/CD39 NTPase family. Ca(2+) serves as cofactor. It depends on Mg(2+) as a cofactor. N-glycosylated. As to expression, expressed in liver, jejunum and kidney.

The protein resides in the cell membrane. It carries out the reaction a ribonucleoside 5'-triphosphate + 2 H2O = a ribonucleoside 5'-phosphate + 2 phosphate + 2 H(+). In terms of biological role, canalicular ectonucleoside NTPDase responsible for the main hepatic NTPDase activity. Ectonucleoside NTPDases catalyze the hydrolysis of gamma- and beta-phosphate residues of nucleotides, playing a central role in concentration of extracellular nucleotides. Has activity toward ATP, ADP, UTP and UDP, but not toward AMP. This chain is Ectonucleoside triphosphate diphosphohydrolase 8 (Entpd8), found in Mus musculus (Mouse).